Reading from the N-terminus, the 344-residue chain is MIDWVTAVLPCLHVPVDAGRVLSVAPDGSVEWESVKFSRVTGSFQSSISVRSQGSDGNGKATHLYVDGNPSKWLQGHNIVGSDDLNGLMIAFYARMLSLLNIPHHLESYRQVLSGQYELKRVDINYMFELPTLIDVRSWLHAAEFKAKTRHGRPATAKGTLYFGKNSRRWSIKAYSKYDEVNCGKKAHGVPEEIKKTGLVEWSKNKLRLELTLRALQLTDINLNFAKNWSTETAYTVFKEYMGRIEMSGNTLLTDTQVINLPSALRMTYVCWKQGICVTDMVSRATYFRHRKVLKEFGIDIAVTVDRVDNSNVVPLIRVLEAKPASIPSQYDNLIFSSNRVSSF.

Belongs to the inovirus G2P protein family.

It catalyses the reaction ATP + (deoxyribonucleotide)n-3'-hydroxyl + 5'-phospho-(deoxyribonucleotide)m = (deoxyribonucleotide)n+m + AMP + diphosphate.. Its function is as follows. Isoform G2P plays an essential role in viral DNA replication. Binds the origin of replication and cleaves the dsDNA replicative form I (RFI) and becomes covalently bound to it via phosphotyrosine bond, generating the dsDNA replicative form II (RFII). In turn, viral DNA replication initiates at the 3'-OH of the cleavage site. After one round of rolling circle synthesis, protein G2P is linked to the newly synthesized ssDNA and joins the ends of the displaced strand to generate a circular single-stranded molecule ready to be packed into a virion. Functionally, isoform G10P protein binds to double-stranded DNA and prevents hydrolysis by nucleases. Additionally, G10P is an inhibitor of DNA replication and may have a role in the transition from semiconservative replicative form DNA replication to single-stranded DNA synthesis in the life cycle. The chain is Replication-associated protein G2P (II) from Enterobacteria phage I2-2 (Bacteriophage I2-2).